A 590-amino-acid polypeptide reads, in one-letter code: Arginine--tRNA ligase (590 aa).

The 'HIGH' region signature appears at 138 to 148 (ANPTGPLHIGH).

This sequence belongs to the class-I aminoacyl-tRNA synthetase family. In terms of assembly, monomer.

The protein localises to the cytoplasm. It carries out the reaction tRNA(Arg) + L-arginine + ATP = L-arginyl-tRNA(Arg) + AMP + diphosphate. This is Arginine--tRNA ligase from Orientia tsutsugamushi (strain Ikeda) (Rickettsia tsutsugamushi).